We begin with the raw amino-acid sequence, 390 residues long: MGTRAIVSDANILSGLESNATGVTAFSMPGWQLALWATAYLALVLVAVTGNATVIWIILAHERMRTVTNYFIINLALADLCMAAFNATFNFIYASHNIWYFGRAFCYFQNLFPITAMFVSIYSMTAIAADRYMAIVHPFQPRLSAPSTKAIIAGIWLVALALASPQCFYSTITVDEGATKCVVAWPNDNGGKMLLLYHLVVFVLIYFLPLLVMFGAYSVIGLTLWKRAVPRHQAHGANLRHLQAKKKFVKAMVLVVLTFAICWLPYHLYFILGTFQEDIYYHKFIQQVYLALFWLAMSSTMYNPIIYCCLNHRFRSGFRLAFRCCPWVTPTEEDRLELTHTPSLSRRVNRCHTKETLFMTGDMTHSEATNGQVGSPQDGEPAGPICKAQA.

Over methionine 1–glutamine 32 the chain is Extracellular. Residue asparagine 19 is glycosylated (N-linked (GlcNAc...) asparagine). A helical transmembrane segment spans residues leucine 33 to tryptophan 56. The Cytoplasmic portion of the chain corresponds to isoleucine 57 to asparagine 69. A helical membrane pass occupies residues tyrosine 70–asparagine 90. The Extracellular segment spans residues phenylalanine 91–tyrosine 107. An intrachain disulfide couples cysteine 106 to cysteine 181. The chain crosses the membrane as a helical span at residues phenylalanine 108 to alanine 129. Over aspartate 130 to lysine 149 the chain is Cytoplasmic. Residues alanine 150–serine 170 form a helical membrane-spanning segment. Residues threonine 171 to leucine 196 are Extracellular-facing. Residues tyrosine 197 to serine 218 form a helical membrane-spanning segment. Residues valine 219 to alanine 251 are Cytoplasmic-facing. Residues methionine 252–leucine 272 traverse the membrane as a helical segment. The Extracellular segment spans residues glycine 273–leucine 290. Residues alanine 291–leucine 310 traverse the membrane as a helical segment. Topologically, residues asparagine 311–alanine 390 are cytoplasmic. Cysteine 324 carries the S-palmitoyl cysteine lipid modification. The segment at histidine 365 to alanine 390 is disordered. The span at serine 366 to serine 375 shows a compositional bias: polar residues.

The protein belongs to the G-protein coupled receptor 1 family.

It localises to the cell membrane. In terms of biological role, this is a receptor for the tachykinin neuropeptide substance K (neurokinin A). It is associated with G proteins that activate a phosphatidylinositol-calcium second messenger system. The rank order of affinity of this receptor to tachykinins is: substance K &gt; neuromedin-K &gt; substance P. This Rattus norvegicus (Rat) protein is Substance-K receptor (Tacr2).